The sequence spans 524 residues: Bifunctional purine biosynthesis protein PurH (524 aa).

In terms of domain architecture, MGS-like spans 1 to 149 (MSDPVIKRAL…KNNESVTVVT (149 aa)).

It belongs to the PurH family.

It catalyses the reaction (6R)-10-formyltetrahydrofolate + 5-amino-1-(5-phospho-beta-D-ribosyl)imidazole-4-carboxamide = 5-formamido-1-(5-phospho-D-ribosyl)imidazole-4-carboxamide + (6S)-5,6,7,8-tetrahydrofolate. It carries out the reaction IMP + H2O = 5-formamido-1-(5-phospho-D-ribosyl)imidazole-4-carboxamide. Its pathway is purine metabolism; IMP biosynthesis via de novo pathway; 5-formamido-1-(5-phospho-D-ribosyl)imidazole-4-carboxamide from 5-amino-1-(5-phospho-D-ribosyl)imidazole-4-carboxamide (10-formyl THF route): step 1/1. It functions in the pathway purine metabolism; IMP biosynthesis via de novo pathway; IMP from 5-formamido-1-(5-phospho-D-ribosyl)imidazole-4-carboxamide: step 1/1. This chain is Bifunctional purine biosynthesis protein PurH, found in Chlorobium chlorochromatii (strain CaD3).